Reading from the N-terminus, the 420-residue chain is Protein translocase subunit SecY (420 aa).

10 consecutive transmembrane segments (helical) span residues 9-29 (ILITLGFLFLYRVLAYIPIPG), 61-81 (LSIISLGIMPYITSSIIMELL), 104-124 (IVRYLTILITLIQAVSVSVGL), 141-161 (VFMIVSAFSMLTGTMLLMWIG), 173-193 (ISLIIFAGIVSGIPSAISGTF), 203-223 (ILMLIGIVLIVLATIFAIIYV), 257-277 (LSGVIPPIFASALLVFPSTIL), 300-320 (YNILMFLLIIFFAYFYSSIVF), 355-375 (KLTLWGSLYLALISTVPWILV), and 377-397 (AMGVPFYFGGTAVLIVVQVAI).

This sequence belongs to the SecY/SEC61-alpha family. In terms of assembly, component of the Sec protein translocase complex. Heterotrimer consisting of SecY, SecE and SecG subunits. The heterotrimers can form oligomers, although 1 heterotrimer is thought to be able to translocate proteins. Interacts with the ribosome. Interacts with SecDF, and other proteins may be involved. Interacts with SecA.

The protein resides in the cell inner membrane. In terms of biological role, the central subunit of the protein translocation channel SecYEG. Consists of two halves formed by TMs 1-5 and 6-10. These two domains form a lateral gate at the front which open onto the bilayer between TMs 2 and 7, and are clamped together by SecE at the back. The channel is closed by both a pore ring composed of hydrophobic SecY resides and a short helix (helix 2A) on the extracellular side of the membrane which forms a plug. The plug probably moves laterally to allow the channel to open. The ring and the pore may move independently. This is Protein translocase subunit SecY from Helicobacter pylori (strain ATCC 700392 / 26695) (Campylobacter pylori).